We begin with the raw amino-acid sequence, 420 residues long: Enolase (420 aa).

A (2R)-2-phosphoglycerate-binding site is contributed by Gln162. Glu206 functions as the Proton donor in the catalytic mechanism. 3 residues coordinate Mg(2+): Asp241, Glu282, and Asp308. (2R)-2-phosphoglycerate is bound by residues Lys333, Arg362, Ser363, and Lys384. Lys333 serves as the catalytic Proton acceptor.

Belongs to the enolase family. It depends on Mg(2+) as a cofactor.

The protein localises to the cytoplasm. The protein resides in the secreted. It localises to the cell surface. It catalyses the reaction (2R)-2-phosphoglycerate = phosphoenolpyruvate + H2O. It participates in carbohydrate degradation; glycolysis; pyruvate from D-glyceraldehyde 3-phosphate: step 4/5. Functionally, catalyzes the reversible conversion of 2-phosphoglycerate (2-PG) into phosphoenolpyruvate (PEP). It is essential for the degradation of carbohydrates via glycolysis. This Methanothrix thermoacetophila (strain DSM 6194 / JCM 14653 / NBRC 101360 / PT) (Methanosaeta thermophila) protein is Enolase.